We begin with the raw amino-acid sequence, 424 residues long: Histidine--tRNA ligase (424 aa).

It belongs to the class-II aminoacyl-tRNA synthetase family. In terms of assembly, homodimer.

Its subcellular location is the cytoplasm. The catalysed reaction is tRNA(His) + L-histidine + ATP = L-histidyl-tRNA(His) + AMP + diphosphate + H(+). In Shigella boydii serotype 18 (strain CDC 3083-94 / BS512), this protein is Histidine--tRNA ligase.